The sequence spans 231 residues: Orotidine 5'-phosphate decarboxylase (231 aa).

Substrate is bound by residues aspartate 11, lysine 33, 60–69 (DLKFHDIPNT), threonine 120, arginine 181, glutamine 190, glycine 210, and arginine 211. Residue lysine 62 is the Proton donor of the active site.

This sequence belongs to the OMP decarboxylase family. Type 1 subfamily. Homodimer.

The catalysed reaction is orotidine 5'-phosphate + H(+) = UMP + CO2. It functions in the pathway pyrimidine metabolism; UMP biosynthesis via de novo pathway; UMP from orotate: step 2/2. Its function is as follows. Catalyzes the decarboxylation of orotidine 5'-monophosphate (OMP) to uridine 5'-monophosphate (UMP). The protein is Orotidine 5'-phosphate decarboxylase of Colwellia psychrerythraea (strain 34H / ATCC BAA-681) (Vibrio psychroerythus).